The sequence spans 302 residues: 1,2-dihydroxynaphthalene dioxygenase (302 aa).

VOC domains are found at residues 9-124 (ELGY…IFWG) and 149-270 (GLGH…PGWR). Fe cation is bound at residue H152. Residues H152, 199-200 (DH), H215, and Y256 each bind substrate. Residue H215 coordinates Fe cation. Residue E266 coordinates Fe cation.

Belongs to the extradiol ring-cleavage dioxygenase family. It depends on Fe(2+) as a cofactor.

It catalyses the reaction naphthalene-1,2-diol + O2 = 2-hydroxychromene-2-carboxylate + H(+). It participates in aromatic compound metabolism; naphthalene degradation. Functionally, involved in the naphthalene catabolic pathway. Catalyzes the meta-cleavage of 1,2-dihydroxynaphthalene (1,2-DHN) to yield 2-hydroxychromene-2-carboxylic acid. This is 1,2-dihydroxynaphthalene dioxygenase (nahC) from Pseudomonas putida (Arthrobacter siderocapsulatus).